Consider the following 455-residue polypeptide: Chitin deacetylase 2 (455 aa).

The N-terminal stretch at 1–19 (MIPSTAAALLTLTAGAAFA) is a signal peptide. N-linked (GlcNAc...) asparagine glycosylation is found at Asn86, Asn98, Asn122, and Asn142. The 191-residue stretch at 157–347 (MTWGLGFDDG…IKSAFNYIVP (191 aa)) folds into the NodB homology domain. The active-site Proton acceptor is Asp164. Asp164 lines the acetate pocket. Asp165 serves as a coordination point for Co(2+). Asn168 carries an N-linked (GlcNAc...) asparagine glycan. Positions 214 and 218 each coordinate Co(2+). Acetate is bound at residue Tyr255. Asn270 and Asn308 each carry an N-linked (GlcNAc...) asparagine glycan. The Proton donor role is filled by His321. N-linked (GlcNAc...) asparagine glycosylation is found at Asn325, Asn353, Asn362, and Asn377. A disordered region spans residues 381 to 423 (STTQKDGSSSTNTASGSGAAGSASATSSSDDSSSSGGSSGSSG). A glycan (N-linked (GlcNAc...) asparagine) is linked at Asn426. Residue Ser429 is the site of GPI-anchor amidated serine attachment. Residues 430-455 (GALGMFDSLSGVGLILGGVVAGVMLL) constitute a propeptide, removed in mature form.

Belongs to the polysaccharide deacetylase family. Requires Co(2+) as cofactor. In terms of processing, the GPI anchor is required for the attachment to the cell membrane but not for cell surface targeting.

It is found in the secreted. Its subcellular location is the cell wall. The protein resides in the cell membrane. It carries out the reaction [(1-&gt;4)-N-acetyl-beta-D-glucosaminyl](n) + n H2O = chitosan + n acetate. In terms of biological role, hydrolyzes the N-acetamido groups of N-acetyl-D-glucosamine residues in chitin to form chitosan and acetate. Chitosan is required to anchor melanin to the cell wall, for maintenance of cell wall integrity, and for proper cytokinesis. Chitosan offers an advantage during infection as it is less readily detected than chitin by host immunosurveillance mechanisms. The chain is Chitin deacetylase 2 from Cryptococcus neoformans var. grubii serotype A (strain H99 / ATCC 208821 / CBS 10515 / FGSC 9487) (Filobasidiella neoformans var. grubii).